Consider the following 143-residue polypeptide: Glutamate-rich protein 4 (143 aa).

The span at 90–106 (LEEEEEDDDEEEQEEEG) shows a compositional bias: acidic residues. The disordered stretch occupies residues 90-143 (LEEEEEDDDEEEQEEEGEGKNCVEENKGLQGKQGEKCSGNPYPAQRLPDFEMTI). The segment covering 107–116 (EGKNCVEENK) has biased composition (basic and acidic residues).

This Rattus norvegicus (Rat) protein is Glutamate-rich protein 4 (Erich4).